A 677-amino-acid chain; its full sequence is Regulator of G-protein signaling 9 (677 aa).

In terms of domain architecture, DEP spans 30-105; the sequence is PETGVRMQNQ…PDSSLYRFQT (76 aa). The region spanning 219–280 is the G protein gamma domain; the sequence is VTAVRKEIMY…ITDDTQFWDL (62 aa). In terms of domain architecture, RGS spans 295–416; that stretch reads RWAFNFSELI…SPIYKEMLAK (122 aa). Disordered stretches follow at residues 530–571 and 639–677; these read SSGL…RAPL and DSGP…GKAG.

As to quaternary structure, heterodimer with GNB5. Interacts with RGS7BP, leading to regulate the subcellular location of the heterodimer formed with GNB5. Component of the RGS9-1-Gbeta5 complex composed of RGS9 (RGS9-1), Gbeta5 (GNB5) and RGS9BP. Interacts with PDE6G and GNAT1. Expressed in the central nervous system. Isoform RGS9L is found in striatum, hypothalamus and nucleus accumbens while isoform RGS9S is expressed in retina and pineal gland.

The protein localises to the membrane. Inhibits signal transduction by increasing the GTPase activity of G protein alpha subunits thereby driving them into their inactive GDP-bound form. Binds to GNAT1. Involved in phototransduction; key element in the recovery phase of visual transduction. This Rattus norvegicus (Rat) protein is Regulator of G-protein signaling 9 (Rgs9).